Consider the following 233-residue polypeptide: 7-cyano-7-deazaguanine synthase (233 aa).

Residue 17–27 (LSGGLDSMVCA) coordinates ATP. Zn(2+) is bound by residues Cys-196, Cys-206, Cys-209, and Cys-212.

Belongs to the QueC family. The cofactor is Zn(2+).

It carries out the reaction 7-carboxy-7-deazaguanine + NH4(+) + ATP = 7-cyano-7-deazaguanine + ADP + phosphate + H2O + H(+). Its pathway is purine metabolism; 7-cyano-7-deazaguanine biosynthesis. Its function is as follows. Catalyzes the ATP-dependent conversion of 7-carboxy-7-deazaguanine (CDG) to 7-cyano-7-deazaguanine (preQ(0)). The protein is 7-cyano-7-deazaguanine synthase of Novosphingobium aromaticivorans (strain ATCC 700278 / DSM 12444 / CCUG 56034 / CIP 105152 / NBRC 16084 / F199).